Reading from the N-terminus, the 626-residue chain is Trehalase (626 aa).

2 consecutive transmembrane segments (helical) span residues 20-40 (KLFLSSSPFNLLFSFPSFIYL) and 45-65 (SLFFFFFFFLCFSFTTSMLDS). Alpha,alpha-trehalose contacts are provided by Arg-224, Asp-232, Asn-268, Arg-277, Gln-279, Arg-344, and Glu-346. Catalysis depends on proton donor/acceptor residues Asp-380 and Glu-580. The alpha,alpha-trehalose site is built by Glu-580 and Glu-595.

Belongs to the glycosyl hydrolase 37 family. Forms homodimers. Highly expressed in flowers. Expressed at low levels in leaves and stems. Expressed in guard cells.

The protein resides in the cell membrane. It localises to the cytoplasm. The protein localises to the nucleus. It carries out the reaction alpha,alpha-trehalose + H2O = alpha-D-glucose + beta-D-glucose. Involved in the regulation of trehalose content by hydrolyzing trehalose to glucose. May play a role in the regulation of abscisic acid-induced stomatal closure in response to drought stress. This chain is Trehalase (TRE1), found in Arabidopsis thaliana (Mouse-ear cress).